We begin with the raw amino-acid sequence, 155 residues long: Cytochrome c-type biogenesis protein CcmE (155 aa).

The Cytoplasmic portion of the chain corresponds to 1–8; it reads MNPLRKKR. The helical; Signal-anchor for type II membrane protein transmembrane segment at 9-29 threads the bilayer; sequence LLIIAALLAGVGLAMTLALGA. Over 30–155 the chain is Periplasmic; it reads LKENINLFYT…GGSSTPAKQG (126 aa). Positions 124 and 128 each coordinate heme. The tract at residues 134 to 155 is disordered; the sequence is TKALRDSGQAAPGGSSTPAKQG.

It belongs to the CcmE/CycJ family.

It localises to the cell inner membrane. In terms of biological role, heme chaperone required for the biogenesis of c-type cytochromes. Transiently binds heme delivered by CcmC and transfers the heme to apo-cytochromes in a process facilitated by CcmF and CcmH. In Pseudomonas savastanoi pv. phaseolicola (strain 1448A / Race 6) (Pseudomonas syringae pv. phaseolicola (strain 1448A / Race 6)), this protein is Cytochrome c-type biogenesis protein CcmE.